A 365-amino-acid polypeptide reads, in one-letter code: S-type anion channel SLAH4 (365 aa).

Residues 1–25 (MEIPSQEIHIMIDNTISRRKERKTN) lie on the Cytoplasmic side of the membrane. Residues 26–46 (LADAEPIVLMSVLSSLHAGYF) traverse the membrane as a helical segment. The Extracellular portion of the chain corresponds to 47–73 (RISLSLCSQALLWKIMVHLHSELPSMA). The helical transmembrane segment at 74–94 (YYLLWYLALATQVSLCFLYAF) threads the bilayer. Residues 95–106 (KCIFLFDMVKEE) are Cytoplasmic-facing. A helical membrane pass occupies residues 107 to 127 (FSHYIGVNYLYAPSISCLLLL). Topologically, residues 128 to 131 (QSAP) are extracellular. The chain crosses the membrane as a helical span at residues 132 to 152 (MIEPHSVLYQTLFWIFAVPVL). At 153–168 (TLDTKLYGQWFTTEKR) the chain is on the cytoplasmic side. The chain crosses the membrane as a helical span at residues 169–189 (FLSIMANPASQVSVIANLVAA). Over 190-199 (RGAAEMGWKE) the chain is Extracellular. Residues 200–220 (CALCLFSLGMVHYLVIFVTLY) form a helical membrane-spanning segment. Over 221–235 (QRLPGGNNFPTTLRP) the chain is Cytoplasmic. Residues 236–256 (VFFLFFAAPATASLAWNSICG) form a helical membrane-spanning segment. Residue Asn257 is a topological domain, extracellular. Residues 258-278 (FDTIAKMLFFLSLFIFISLVC) traverse the membrane as a helical segment. Topologically, residues 279 to 291 (RPNLLKKSIKRFN) are cytoplasmic. A helical membrane pass occupies residues 292 to 312 (VAWWAYSFPITFLALNSVQYA). Residues 313–321 (QEVKDHVAS) lie on the Extracellular side of the membrane. Residues 322-342 (VLMFIFSSMSVLIFISVMLLT) traverse the membrane as a helical segment. The Cytoplasmic segment spans residues 343–365 (AANSKRLLRRDHVLWSSTGPKDK).

Belongs to the SLAC1 S-type anion channel family. In terms of assembly, homotrimer.

It is found in the cell membrane. Functionally, slow, weak voltage-dependent S-type anion efflux channel involved in maintenance of anion homeostasis. This is S-type anion channel SLAH4 (SLAH4) from Arabidopsis thaliana (Mouse-ear cress).